We begin with the raw amino-acid sequence, 676 residues long: tRNA 5-methylaminomethyl-2-thiouridine biosynthesis bifunctional protein MnmC (676 aa).

The interval 1–241 (MFTVTPAKIY…KRECLCGIKN (241 aa)) is tRNA (mnm(5)s(2)U34)-methyltransferase. The FAD-dependent cmnm(5)s(2)U34 oxidoreductase stretch occupies residues 268-676 (IGGGIASLFT…RKLLKGTEIK (409 aa)).

The protein in the N-terminal section; belongs to the methyltransferase superfamily. tRNA (mnm(5)s(2)U34)-methyltransferase family. It in the C-terminal section; belongs to the DAO family. FAD is required as a cofactor.

The protein resides in the cytoplasm. The enzyme catalyses 5-aminomethyl-2-thiouridine(34) in tRNA + S-adenosyl-L-methionine = 5-methylaminomethyl-2-thiouridine(34) in tRNA + S-adenosyl-L-homocysteine + H(+). In terms of biological role, catalyzes the last two steps in the biosynthesis of 5-methylaminomethyl-2-thiouridine (mnm(5)s(2)U) at the wobble position (U34) in tRNA. Catalyzes the FAD-dependent demodification of cmnm(5)s(2)U34 to nm(5)s(2)U34, followed by the transfer of a methyl group from S-adenosyl-L-methionine to nm(5)s(2)U34, to form mnm(5)s(2)U34. In Histophilus somni (strain 129Pt) (Haemophilus somnus), this protein is tRNA 5-methylaminomethyl-2-thiouridine biosynthesis bifunctional protein MnmC.